We begin with the raw amino-acid sequence, 100 residues long: Aspartyl/glutamyl-tRNA(Asn/Gln) amidotransferase subunit C (100 aa).

The protein belongs to the GatC family. In terms of assembly, heterotrimer of A, B and C subunits.

The catalysed reaction is L-glutamyl-tRNA(Gln) + L-glutamine + ATP + H2O = L-glutaminyl-tRNA(Gln) + L-glutamate + ADP + phosphate + H(+). It catalyses the reaction L-aspartyl-tRNA(Asn) + L-glutamine + ATP + H2O = L-asparaginyl-tRNA(Asn) + L-glutamate + ADP + phosphate + 2 H(+). Its function is as follows. Allows the formation of correctly charged Asn-tRNA(Asn) or Gln-tRNA(Gln) through the transamidation of misacylated Asp-tRNA(Asn) or Glu-tRNA(Gln) in organisms which lack either or both of asparaginyl-tRNA or glutaminyl-tRNA synthetases. The reaction takes place in the presence of glutamine and ATP through an activated phospho-Asp-tRNA(Asn) or phospho-Glu-tRNA(Gln). The chain is Aspartyl/glutamyl-tRNA(Asn/Gln) amidotransferase subunit C from Rickettsia bellii (strain OSU 85-389).